Reading from the N-terminus, the 594-residue chain is Proteasome-associated ATPase (594 aa).

The segment covering 1–10 (MMETPNNDSS) has biased composition (polar residues). A disordered region spans residues 1-23 (MMETPNNDSSRTPDEAAGAPDPE). Residues 35 to 86 (ADRQVNILRDKLRHIDRQLAAATQNNSKLVGMLETAKAEILRLKNALDQEGQ) adopt a coiled-coil conformation. Position 282–287 (282–287 (GCGKTL)) interacts with ATP. The docks into pockets in the proteasome alpha-ring stretch occupies residues 593–594 (YL).

This sequence belongs to the AAA ATPase family. Homohexamer. Assembles into a hexameric ring structure that caps the 20S proteasome core. Strongly interacts with the prokaryotic ubiquitin-like protein Pup through a hydrophobic interface; the interacting region of ARC lies in its N-terminal coiled-coil domain. There is one Pup binding site per ARC hexamer ring. Upon ATP-binding, the C-terminus of ARC interacts with the alpha-rings of the proteasome core, possibly by binding to the intersubunit pockets.

It functions in the pathway protein degradation; proteasomal Pup-dependent pathway. ATPase which is responsible for recognizing, binding, unfolding and translocation of pupylated proteins into the bacterial 20S proteasome core particle. May be essential for opening the gate of the 20S proteasome via an interaction with its C-terminus, thereby allowing substrate entry and access to the site of proteolysis. Thus, the C-termini of the proteasomal ATPase may function like a 'key in a lock' to induce gate opening and therefore regulate proteolysis. This chain is Proteasome-associated ATPase, found in Arthrobacter sp. (strain FB24).